Reading from the N-terminus, the 236-residue chain is Ribonuclease 3 (236 aa).

An RNase III domain is found at 6 to 140; it reads FLDFLKQNRI…FIGAVAQDQG (135 aa). Residue Glu-46 coordinates Mg(2+). Asp-50 is a catalytic residue. Residues Asp-126 and Glu-129 each contribute to the Mg(2+) site. Glu-129 is an active-site residue. The region spanning 166–231 is the DRBM domain; sequence DYKTIFQEQA…AKNAILKLDD (66 aa).

The protein belongs to the ribonuclease III family. As to quaternary structure, homodimer. Requires Mg(2+) as cofactor.

It is found in the cytoplasm. The catalysed reaction is Endonucleolytic cleavage to 5'-phosphomonoester.. Functionally, digests double-stranded RNA. Involved in the processing of primary rRNA transcript to yield the immediate precursors to the large and small rRNAs (23S and 16S). Processes some mRNAs, and tRNAs when they are encoded in the rRNA operon. Processes pre-crRNA and tracrRNA of type II CRISPR loci if present in the organism. The polypeptide is Ribonuclease 3 (Ureaplasma parvum serovar 3 (strain ATCC 700970)).